A 98-amino-acid chain; its full sequence is Aspartyl/glutamyl-tRNA(Asn/Gln) amidotransferase subunit C (98 aa).

Belongs to the GatC family. As to quaternary structure, heterotrimer of A, B and C subunits.

It catalyses the reaction L-glutamyl-tRNA(Gln) + L-glutamine + ATP + H2O = L-glutaminyl-tRNA(Gln) + L-glutamate + ADP + phosphate + H(+). The enzyme catalyses L-aspartyl-tRNA(Asn) + L-glutamine + ATP + H2O = L-asparaginyl-tRNA(Asn) + L-glutamate + ADP + phosphate + 2 H(+). Its function is as follows. Allows the formation of correctly charged Asn-tRNA(Asn) or Gln-tRNA(Gln) through the transamidation of misacylated Asp-tRNA(Asn) or Glu-tRNA(Gln) in organisms which lack either or both of asparaginyl-tRNA or glutaminyl-tRNA synthetases. The reaction takes place in the presence of glutamine and ATP through an activated phospho-Asp-tRNA(Asn) or phospho-Glu-tRNA(Gln). The protein is Aspartyl/glutamyl-tRNA(Asn/Gln) amidotransferase subunit C of Gloeothece citriformis (strain PCC 7424) (Cyanothece sp. (strain PCC 7424)).